Consider the following 479-residue polypeptide: U3 snoRNP-associated protein-like EMB2271 (479 aa).

A disordered region spans residues 1–73 (MKLEKKKGIG…AHETVGEKRK (73 aa)). The segment covering 8–17 (GIGAKRRGKK) has biased composition (basic residues). A compositionally biased stretch (basic and acidic residues) spans 18-38 (SSIDHDPFLEEETEKRRKFNY). The span at 39–51 (DDDDDIESVESEE) shows a compositional bias: acidic residues. The span at 52–73 (EGKVGEEVEDEFAHETVGEKRK) shows a compositional bias: basic and acidic residues. 7 WD repeats span residues 143-182 (KHQHSVTGVALSDDDSRGFSVSKDGTILHWDVSSGKSDEY), 204-243 (RHNKQSLALAVSSDGRYLATGGVDCHVHLWDIRTREHVQA), 246-285 (GHCGIVSSLCFREGTAELFSGSYDGTLSIWNAEHRTYIES), 288-326 (GHQSELLSIDALGRERVLSVGRDRTMQLYKVPESTRLIY), 328-366 (ASESNFECCCFVNSDEFLSGSDNGSIALWSILKKKPVFI), 386-425 (PACSWVSSVAVCRGSELAASGAGNGCVRLWGVESGSSAIQ), and 431-471 (PLPG…QNGV).

Belongs to the WD repeat RRP9 family.

Its subcellular location is the nucleus. It localises to the nucleolus. Its function is as follows. Component of a nucleolar small nuclear ribonucleoprotein particle (snoRNP) thought to participate in the processing and modification of pre-ribosomal RNA. Essential for embryogenesis. May function during late embryogenesis. The chain is U3 snoRNP-associated protein-like EMB2271 from Arabidopsis thaliana (Mouse-ear cress).